The chain runs to 739 residues: Potassium transporter 26 (739 aa).

At 1 to 81 (MEYHHRPHSP…RQVALLSFQS (81 aa)) the chain is on the cytoplasmic side. The chain crosses the membrane as a helical span at residues 82–102 (LGVVYGDLGTSPLYVFSSISL). At 103–112 (DDPGEADFVG) the chain is on the extracellular side. Residues 113 to 133 (ILSIILWTFTMICLVKYVFIV) form a helical membrane-spanning segment. The Cytoplasmic portion of the chain corresponds to 134-198 (LKADDHGEGG…KFLEQSTKWQ (65 aa)). A helical membrane pass occupies residues 199–219 (AVITYIVLAGTCMVLGDGALT). The Extracellular segment spans residues 220–236 (PAISVLSAVQGIQSRSS). A helical membrane pass occupies residues 237–257 (SITQAHVVLLSVIILFILFFF). At 258–268 (QKHGTSKVSFT) the chain is on the cytoplasmic side. A helical transmembrane segment spans residues 269–289 (FSPIMILWFTFVAFIGLYNII). The Extracellular segment spans residues 290–318 (KHYPPILKAVSPHYIIIYFIRNKRAAWET). The helical transmembrane segment at 319 to 339 (LGAIVLCITGAEAMFADLGHF) threads the bilayer. The Cytoplasmic segment spans residues 340-347 (NKSSIQMA). The helical transmembrane segment at 348 to 368 (FSVIVYPSMILAYAGQAAFLV) threads the bilayer. Residues 369 to 385 (KNPSKLSTTFYSSTPEP) are Extracellular-facing. The helical transmembrane segment at 386–406 (LFWPMFIIATLAAIVASQALI) threads the bilayer. Over 407–437 (SASFSIIRQSIALGCFPRVTMKHTSGKHEGQ) the chain is Cytoplasmic. The chain crosses the membrane as a helical span at residues 438–458 (VYSPEINYFLMVACILITVGF). Residues 459-469 (KGGPEIGQAFG) are Extracellular-facing. A helical transmembrane segment spans residues 470–490 (VAVIFVMLFTTNLMTVVMLII). The Cytoplasmic portion of the chain corresponds to 491 to 494 (WESN). The chain crosses the membrane as a helical span at residues 495 to 515 (IALASLFFVFFFSIEGIYMTS). Over 516 to 519 (LMNK) the chain is Extracellular. The chain crosses the membrane as a helical span at residues 520 to 540 (ILQGGWVPFAITAFFLIITLS). Residues 541 to 739 (WTYGRSKKGE…TLQVGMLYEI (199 aa)) lie on the Cytoplasmic side of the membrane.

Belongs to the HAK/KUP transporter (TC 2.A.72.3) family.

The protein localises to the membrane. High-affinity potassium transporter. In Oryza sativa subsp. japonica (Rice), this protein is Potassium transporter 26 (HAK26).